A 430-amino-acid polypeptide reads, in one-letter code: Adenylosuccinate synthetase (430 aa).

Residues 12–18 (GDEGKGK) and 40–42 (GHT) each bind GTP. The active-site Proton acceptor is the aspartate 13. Mg(2+)-binding residues include aspartate 13 and glycine 40. IMP-binding positions include 13–16 (DEGK), 38–41 (NAGH), threonine 128, arginine 142, glutamine 223, threonine 238, and arginine 302. Histidine 41 (proton donor) is an active-site residue. 298 to 304 (TTTGRPR) contributes to the substrate binding site. Residues arginine 304, 330–332 (SID), and 413–415 (SVG) contribute to the GTP site.

Belongs to the adenylosuccinate synthetase family. Homodimer. It depends on Mg(2+) as a cofactor.

It localises to the cytoplasm. The enzyme catalyses IMP + L-aspartate + GTP = N(6)-(1,2-dicarboxyethyl)-AMP + GDP + phosphate + 2 H(+). Its pathway is purine metabolism; AMP biosynthesis via de novo pathway; AMP from IMP: step 1/2. In terms of biological role, plays an important role in the de novo pathway of purine nucleotide biosynthesis. Catalyzes the first committed step in the biosynthesis of AMP from IMP. The chain is Adenylosuccinate synthetase from Lactococcus lactis subsp. cremoris (strain MG1363).